The chain runs to 236 residues: Small ribosomal subunit protein uS3 (236 aa).

The 69-residue stretch at 38–106 (LRRYLHTRLK…DIQINISEIK (69 aa)) folds into the KH type-2 domain. Positions 211-236 (DLSPNVQAQQRKMKESPQQRRQRRGG) are disordered.

This sequence belongs to the universal ribosomal protein uS3 family. As to quaternary structure, part of the 30S ribosomal subunit. Forms a tight complex with proteins S10 and S14.

Binds the lower part of the 30S subunit head. Binds mRNA in the 70S ribosome, positioning it for translation. The chain is Small ribosomal subunit protein uS3 from Salinibacter ruber (strain DSM 13855 / M31).